A 312-amino-acid chain; its full sequence is Ribosomal RNA small subunit methyltransferase H (312 aa).

S-adenosyl-L-methionine is bound by residues 35-37 (GGH), Asp55, Phe79, Asp101, and Gln108.

The protein belongs to the methyltransferase superfamily. RsmH family.

It is found in the cytoplasm. It catalyses the reaction cytidine(1402) in 16S rRNA + S-adenosyl-L-methionine = N(4)-methylcytidine(1402) in 16S rRNA + S-adenosyl-L-homocysteine + H(+). Its function is as follows. Specifically methylates the N4 position of cytidine in position 1402 (C1402) of 16S rRNA. This is Ribosomal RNA small subunit methyltransferase H from Glaesserella parasuis serovar 5 (strain SH0165) (Haemophilus parasuis).